We begin with the raw amino-acid sequence, 685 residues long: MQDIQLDKLLSADMSPENAQQVMQALSQSLNEHNIRYYVDDAPTITDSEYDRLMQCLIKLEAQFPQFIVADSPTQRVGGLALAKFDQITHLKPMLSLDNAFGEADFSAFHKRVTDKVGEVSFCCEPKLDGLAVSILYRHGVLERAATRGDGTVGEDITENVKTIKSIPLKLRGNDFPEVVEVRGEAFMPKAAFEALNERARAKDEKLFVNPRNAAAGSLRQLDSKITASRSLAFYAYALGVVEPDSYSLGKTHYEQLQQLKSWGLPVSNEIKVCEELDQVFDYYKDILTRRSDLPFEIDGVVMKVNDIAQQQRLGFVAKSPRWAIAYKFPAQEEMTLLEGVDFQVGRTGAVTPVARLKPVFVGGVTVSNATLHNADEIERLGIKIGDTVIIRRAGDVIPQIVAIVPERRPETATDIVFPHNCPVCGSLVERLEGEAVARCSGGLFCEAQRKEAIKHFASRKALDIDGMGDKVVEQLIDKELVQSPADLFKLTASMMTMLDRMGMKSATNLAAAIEAAKTTTLARFLYALGIREVGEATAANLAAHFASLDALRVATVEQLTAVEDVGVVVAQHVAHFFAQPHNLEVIDALIAAGVHWPAIEAPSADAQPLKGQTWVLTGTLNQLNRNDAKAQLQTLGAKVAGSVSKNTDCLVAGEAAGSKLAKAQELGVKVIDEEALLALFAANR.

NAD(+) contacts are provided by residues Asp47 to Asp51, Ser96 to Leu97, and Glu125. The active-site N6-AMP-lysine intermediate is Lys127. 4 residues coordinate NAD(+): Arg148, Glu185, Lys304, and Lys328. 4 residues coordinate Zn(2+): Cys422, Cys425, Cys440, and Cys446. One can recognise a BRCT domain in the interval Ala605–Arg685.

This sequence belongs to the NAD-dependent DNA ligase family. LigA subfamily. Requires Mg(2+) as cofactor. It depends on Mn(2+) as a cofactor.

The catalysed reaction is NAD(+) + (deoxyribonucleotide)n-3'-hydroxyl + 5'-phospho-(deoxyribonucleotide)m = (deoxyribonucleotide)n+m + AMP + beta-nicotinamide D-nucleotide.. Functionally, DNA ligase that catalyzes the formation of phosphodiester linkages between 5'-phosphoryl and 3'-hydroxyl groups in double-stranded DNA using NAD as a coenzyme and as the energy source for the reaction. It is essential for DNA replication and repair of damaged DNA. In Shewanella sp. (strain W3-18-1), this protein is DNA ligase.